The following is a 239-amino-acid chain: Uridylate kinase (239 aa).

Residue 13–16 (KISG) coordinates ATP. Position 55 (Gly-55) interacts with UMP. ATP-binding residues include Gly-56 and Arg-60. Residues Asp-75 and 136-143 (LGIPFFTT) contribute to the UMP site. The ATP site is built by Thr-163, Tyr-169, and Asp-172.

This sequence belongs to the UMP kinase family. Homohexamer.

The protein localises to the cytoplasm. The catalysed reaction is UMP + ATP = UDP + ADP. It participates in pyrimidine metabolism; CTP biosynthesis via de novo pathway; UDP from UMP (UMPK route): step 1/1. With respect to regulation, inhibited by UTP. Its function is as follows. Catalyzes the reversible phosphorylation of UMP to UDP. This is Uridylate kinase from Buchnera aphidicola subsp. Cinara cedri (strain Cc).